The sequence spans 542 residues: 1,3-beta-glucanosyltransferase gas1 (542 aa).

A signal peptide spans Met-1–Ala-19. Asn-35 is a glycosylation site (N-linked (GlcNAc...) asparagine). Cys-70 and Cys-99 are disulfide-bonded. (1,3-beta-D-glucosyl)n is bound at residue Tyr-88. Asn-91 carries an N-linked (GlcNAc...) asparagine glycan. Asn-156 and Glu-157 together coordinate (1,3-beta-D-glucosyl)n. The active-site Proton donor is Glu-157. The N-linked (GlcNAc...) asparagine glycan is linked to Asn-161. (1,3-beta-D-glucosyl)n-binding residues include Asp-198 and Arg-203. 5 cysteine pairs are disulfide-bonded: Cys-212–Cys-345, Cys-230–Cys-261, Cys-367–Cys-419, Cys-376–Cys-439, and Cys-395–Cys-400. Asn-249 carries N-linked (GlcNAc...) asparagine glycosylation. Glu-258 (nucleophile) is an active-site residue. Asn-279 carries N-linked (GlcNAc...) asparagine glycosylation. Tyr-290 serves as a coordination point for (1,3-beta-D-glucosyl)n. Residues Asn-406, Asn-484, Asn-502, and Asn-509 are each glycosylated (N-linked (GlcNAc...) asparagine). Positions Met-490 to Ser-515 are disordered. Ser-516 carries the GPI-anchor amidated serine lipid modification. A propeptide spans Gly-517–Ile-542 (removed in mature form).

The protein belongs to the glycosyl hydrolase 72 family. In terms of processing, the GPI-anchor is attached to the protein in the endoplasmic reticulum and serves to target the protein to the cell surface. There, the glucosamine-inositol phospholipid moiety is cleaved off and the GPI-modified mannoprotein is covalently attached via its lipidless GPI glycan remnant to the 1,6-beta-glucan of the outer cell wall layer.

Its subcellular location is the secreted. The protein localises to the cell wall. It localises to the membrane. Its function is as follows. Splits internally a 1,3-beta-glucan molecule and transfers the newly generated reducing end (the donor) to the non-reducing end of another 1,3-beta-glucan molecule (the acceptor) forming a 1,3-beta linkage, resulting in the elongation of 1,3-beta-glucan chains in the cell wall. This is 1,3-beta-glucanosyltransferase gas1 (gas1) from Schizosaccharomyces pombe (strain 972 / ATCC 24843) (Fission yeast).